Consider the following 484-residue polypeptide: Sperm motility kinase 2B (484 aa).

Residues tyrosine 8–valine 256 form the Protein kinase domain. ATP contacts are provided by residues isoleucine 14–valine 22 and lysine 37. Aspartate 127 functions as the Proton acceptor in the catalytic mechanism. In terms of domain architecture, UBA spans proline 272–lysine 314. Polar residues-rich tracts occupy residues proline 356 to serine 373 and serine 422 to serine 434. 2 disordered regions span residues proline 356–histidine 400 and serine 422–lysine 450.

The protein belongs to the protein kinase superfamily. CAMK Ser/Thr protein kinase family. Smok subfamily. Testis-specific. Expressed in the testis from 22 days postpartum (22 dpp).

The enzyme catalyses L-seryl-[protein] + ATP = O-phospho-L-seryl-[protein] + ADP + H(+). It catalyses the reaction L-threonyl-[protein] + ATP = O-phospho-L-threonyl-[protein] + ADP + H(+). Functionally, may play a role in sperm motility, especially in the regulation of flagellar function. This is Sperm motility kinase 2B from Mus musculus (Mouse).